The primary structure comprises 416 residues: Peptide chain release factor subunit 1 (416 aa).

This sequence belongs to the eukaryotic release factor 1 family. In terms of assembly, heterodimer of two subunits, one of which binds GTP.

Its subcellular location is the cytoplasm. Its function is as follows. Directs the termination of nascent peptide synthesis (translation) in response to the termination codons UAA, UAG and UGA. The polypeptide is Peptide chain release factor subunit 1 (Halobacterium salinarum (strain ATCC 29341 / DSM 671 / R1)).